The primary structure comprises 32 residues: Photosystem II reaction center protein Z (32 aa).

Residues 9 to 31 (FILIGSASWAALVLLVGSLNSFV) traverse the membrane as a helical segment.

The protein belongs to the PsbZ family. In terms of assembly, PSII is composed of 1 copy each of membrane proteins PsbA, PsbB, PsbC, PsbD, PsbE, PsbF, PsbH, PsbI, PsbJ, PsbK, PsbL, PsbM, PsbT, PsbY, PsbZ, Psb30/Ycf12, at least 3 peripheral proteins of the oxygen-evolving complex and a large number of cofactors. It forms dimeric complexes.

The protein resides in the plastid. It is found in the chloroplast thylakoid membrane. May control the interaction of photosystem II (PSII) cores with the light-harvesting antenna, regulates electron flow through the 2 photosystem reaction centers. PSII is a light-driven water plastoquinone oxidoreductase, using light energy to abstract electrons from H(2)O, generating a proton gradient subsequently used for ATP formation. This is Photosystem II reaction center protein Z from Euglena viridis (Cercaria viridis).